The chain runs to 873 residues: Leucine--tRNA ligase (873 aa).

Positions 41-51 (PYPSGRIHMGH) match the 'HIGH' region motif. Positions 645–649 (KMSKS) match the 'KMSKS' region motif. Lys-648 is an ATP binding site.

It belongs to the class-I aminoacyl-tRNA synthetase family.

It localises to the cytoplasm. The catalysed reaction is tRNA(Leu) + L-leucine + ATP = L-leucyl-tRNA(Leu) + AMP + diphosphate. In Cereibacter sphaeroides (strain ATCC 17025 / ATH 2.4.3) (Rhodobacter sphaeroides), this protein is Leucine--tRNA ligase.